A 159-amino-acid chain; its full sequence is Endoribonuclease YbeY (159 aa).

Zn(2+) is bound by residues His125, His129, and His135.

This sequence belongs to the endoribonuclease YbeY family. The cofactor is Zn(2+).

It localises to the cytoplasm. Single strand-specific metallo-endoribonuclease involved in late-stage 70S ribosome quality control and in maturation of the 3' terminus of the 16S rRNA. This Limosilactobacillus reuteri (strain DSM 20016) (Lactobacillus reuteri) protein is Endoribonuclease YbeY.